A 322-amino-acid chain; its full sequence is Malate dehydrogenase (322 aa).

NAD(+)-binding positions include 10 to 15 (GSGQIG) and Asp34. The substrate site is built by Arg83 and Arg89. Residues Asn96 and 119–121 (ITN) contribute to the NAD(+) site. Substrate contacts are provided by Asn121 and Arg152. His176 acts as the Proton acceptor in catalysis.

The protein belongs to the LDH/MDH superfamily. MDH type 3 family.

The enzyme catalyses (S)-malate + NAD(+) = oxaloacetate + NADH + H(+). Its function is as follows. Catalyzes the reversible oxidation of malate to oxaloacetate. The sequence is that of Malate dehydrogenase from Bradyrhizobium sp. (strain ORS 278).